A 331-amino-acid polypeptide reads, in one-letter code: Malate dehydrogenase (331 aa).

14-20 is a binding site for NAD(+); that stretch reads GAAGSIG. Arginine 95 and arginine 101 together coordinate substrate. Residues asparagine 108, glutamine 115, and 132–134 contribute to the NAD(+) site; that span reads VGN. Substrate is bound by residues asparagine 134 and arginine 165. Histidine 190 serves as the catalytic Proton acceptor.

The protein belongs to the LDH/MDH superfamily. MDH type 2 family.

It carries out the reaction (S)-malate + NAD(+) = oxaloacetate + NADH + H(+). Its function is as follows. Catalyzes the reversible oxidation of malate to oxaloacetate. The protein is Malate dehydrogenase of Rhodococcus opacus (strain B4).